The sequence spans 441 residues: Tol-Pal system protein TolB (441 aa).

The signal sequence occupies residues 1–39 (MPAMTPAFRRADLTGFLRTYGAALILLLAAMLAWQPAQA).

Belongs to the TolB family. As to quaternary structure, the Tol-Pal system is composed of five core proteins: the inner membrane proteins TolA, TolQ and TolR, the periplasmic protein TolB and the outer membrane protein Pal. They form a network linking the inner and outer membranes and the peptidoglycan layer.

The protein localises to the periplasm. Part of the Tol-Pal system, which plays a role in outer membrane invagination during cell division and is important for maintaining outer membrane integrity. The chain is Tol-Pal system protein TolB from Bordetella parapertussis (strain 12822 / ATCC BAA-587 / NCTC 13253).